Here is a 380-residue protein sequence, read N- to C-terminus: Two-component response regulator ORR28 (380 aa).

Positions 13 to 130 (SAMVIDEDKC…TIQNLWQHLD (118 aa)) constitute a Response regulatory domain. Asp65 is modified (4-aspartylphosphate). The segment at residues 169-223 (RKYYLMWTPHLQKKFLHALEILGEGQISLMIMDVDNIDRKQISTHLQKHRLQLKK) is a DNA-binding region (myb-like GARP). A disordered region spans residues 225–245 (LSKASFTKGSNEDTSNPSAKN). Residues 228–245 (ASFTKGSNEDTSNPSAKN) show a composition bias toward polar residues.

It belongs to the ARR family. Type-B subfamily. Post-translationally, two-component system major event consists of a His-to-Asp phosphorelay between a sensor histidine kinase (HK) and a response regulator (RR). In plants, the His-to-Asp phosphorelay involves an additional intermediate named Histidine-containing phosphotransfer protein (HPt). This multistep phosphorelay consists of a His-Asp-His-Asp sequential transfer of a phosphate group between first a His and an Asp of the HK protein, followed by the transfer to a conserved His of the HPt protein and finally the transfer to an Asp in the receiver domain of the RR protein.

Its subcellular location is the nucleus. In terms of biological role, transcriptional activator that binds specific DNA sequence. Functions as a response regulator involved in His-to-Asp phosphorelay signal transduction system. Phosphorylation of the Asp residue in the receiver domain activates the ability of the protein to promote the transcription of target genes. May directly activate some type-A response regulators in response to cytokinins. In Oryza sativa subsp. indica (Rice), this protein is Two-component response regulator ORR28.